Consider the following 317-residue polypeptide: Protein-L-isoaspartate O-methyltransferase (317 aa).

The active site involves serine 59.

Belongs to the methyltransferase superfamily. L-isoaspartyl/D-aspartyl protein methyltransferase family. Monomer.

Its subcellular location is the cytoplasm. The catalysed reaction is [protein]-L-isoaspartate + S-adenosyl-L-methionine = [protein]-L-isoaspartate alpha-methyl ester + S-adenosyl-L-homocysteine. Its function is as follows. Catalyzes the methyl esterification of L-isoaspartyl residues in peptides and proteins that result from spontaneous decomposition of normal L-aspartyl and L-asparaginyl residues. It plays a role in the repair and/or degradation of damaged proteins. The sequence is that of Protein-L-isoaspartate O-methyltransferase (pcm) from Thermotoga maritima (strain ATCC 43589 / DSM 3109 / JCM 10099 / NBRC 100826 / MSB8).